A 315-amino-acid polypeptide reads, in one-letter code: Acetyl-coenzyme A carboxylase carboxyl transferase subunit alpha (315 aa).

The CoA carboxyltransferase C-terminal domain maps to 38 to 292; it reads RLQKKSNELT…KLRLKEDLAE (255 aa).

The protein belongs to the AccA family. As to quaternary structure, acetyl-CoA carboxylase is a heterohexamer composed of biotin carboxyl carrier protein (AccB), biotin carboxylase (AccC) and two subunits each of ACCase subunit alpha (AccA) and ACCase subunit beta (AccD).

It localises to the cytoplasm. It carries out the reaction N(6)-carboxybiotinyl-L-lysyl-[protein] + acetyl-CoA = N(6)-biotinyl-L-lysyl-[protein] + malonyl-CoA. The protein operates within lipid metabolism; malonyl-CoA biosynthesis; malonyl-CoA from acetyl-CoA: step 1/1. In terms of biological role, component of the acetyl coenzyme A carboxylase (ACC) complex. First, biotin carboxylase catalyzes the carboxylation of biotin on its carrier protein (BCCP) and then the CO(2) group is transferred by the carboxyltransferase to acetyl-CoA to form malonyl-CoA. In Haemophilus influenzae (strain PittEE), this protein is Acetyl-coenzyme A carboxylase carboxyl transferase subunit alpha.